The primary structure comprises 113 residues: uncharacterized protein (113 aa).

It to H.pylori HP0245/JHP0230.

This is an uncharacterized protein from Campylobacter jejuni subsp. jejuni serotype O:2 (strain ATCC 700819 / NCTC 11168).